The following is a 304-amino-acid chain: MQNFGKVAVLMGGFSSEREISLDSGTAILNALKSKGIDAYAFDPKETPLSELKAQGFQTAFNILHGTYGEDGAVQGALELLGIPYTGSGVAASAIGMDKYRCKLIWQALGLPVPEFAVLHDDTDFDAVEEKLGLPMFVKPAAEGSSVGVVKVKGKGRLKSVYEELKHLQGEIIAERFIGGGEYSCPVLNGKGLPGIHIIPATEFYDYEAKYNRDDTIYQCPSEDLTEAEESLMRELAVRGAQAIGAEGCVRVDFLKDTDGKLYLLEINTLPGMTSHSLVPKSAAVTGVGFADLCIEILKTAHVG.

Positions 103-299 (KLIWQALGLP…FADLCIEILK (197 aa)) constitute an ATP-grasp domain. 129-184 (EEKLGLPMFVKPAAEGSSVGVVKVKGKGRLKSVYEELKHLQGEIIAERFIGGGEYS) provides a ligand contact to ATP. 3 residues coordinate Mg(2+): D253, E266, and N268.

This sequence belongs to the D-alanine--D-alanine ligase family. Mg(2+) is required as a cofactor. Mn(2+) serves as cofactor.

The protein localises to the cytoplasm. The enzyme catalyses 2 D-alanine + ATP = D-alanyl-D-alanine + ADP + phosphate + H(+). The protein operates within cell wall biogenesis; peptidoglycan biosynthesis. Cell wall formation. In Neisseria meningitidis serogroup B (strain ATCC BAA-335 / MC58), this protein is D-alanine--D-alanine ligase.